A 309-amino-acid polypeptide reads, in one-letter code: Uricase-2 isozyme 2 (309 aa).

Residues K18 and T64 each act as charge relay system in the active site. The urate site is built by T64, D65, F166, R183, V238, Q239, and N265. H267 (charge relay system) is an active-site residue.

This sequence belongs to the uricase family. Homotetramer.

The protein localises to the peroxisome. It catalyses the reaction urate + O2 + H2O = 5-hydroxyisourate + H2O2. It functions in the pathway purine metabolism; urate degradation; (S)-allantoin from urate: step 1/3. Its function is as follows. Catalyzes the oxidation of uric acid to 5-hydroxyisourate, which is further processed to form (S)-allantoin. This is Uricase-2 isozyme 2 from Glycine max (Soybean).